The following is a 262-amino-acid chain: Type II pantothenate kinase (262 aa).

Position 7–14 (7–14 (DAGGSLVK)) interacts with ATP. The Proton acceptor role is filled by Glu71. Residues Thr101, 119–123 (GGLLT), and Tyr135 contribute to the ATP site.

Belongs to the type II pantothenate kinase family. As to quaternary structure, homodimer.

Its subcellular location is the cytoplasm. It carries out the reaction (R)-pantothenate + ATP = (R)-4'-phosphopantothenate + ADP + H(+). It functions in the pathway cofactor biosynthesis; coenzyme A biosynthesis; CoA from (R)-pantothenate: step 1/5. In terms of biological role, catalyzes the phosphorylation of pantothenate (Pan), the first step in CoA biosynthesis. The protein is Type II pantothenate kinase of Oceanobacillus iheyensis (strain DSM 14371 / CIP 107618 / JCM 11309 / KCTC 3954 / HTE831).